Reading from the N-terminus, the 406-residue chain is Cysteine desulfurase (406 aa).

Lys226 carries the N6-(pyridoxal phosphate)lysine modification. Cys364 functions as the Cysteine persulfide intermediate in the catalytic mechanism.

It belongs to the class-V pyridoxal-phosphate-dependent aminotransferase family. Csd subfamily. Homodimer. Interacts with SufE and the SufBCD complex composed of SufB, SufC and SufD. The interaction with SufE is required to mediate the direct transfer of the sulfur atom from the S-sulfanylcysteine. The cofactor is pyridoxal 5'-phosphate.

The protein localises to the cytoplasm. It carries out the reaction (sulfur carrier)-H + L-cysteine = (sulfur carrier)-SH + L-alanine. It catalyses the reaction L-selenocysteine + AH2 = hydrogenselenide + L-alanine + A + H(+). The protein operates within cofactor biosynthesis; iron-sulfur cluster biosynthesis. Functionally, cysteine desulfurases mobilize the sulfur from L-cysteine to yield L-alanine, an essential step in sulfur metabolism for biosynthesis of a variety of sulfur-containing biomolecules. Component of the suf operon, which is activated and required under specific conditions such as oxidative stress and iron limitation. Acts as a potent selenocysteine lyase in vitro, that mobilizes selenium from L-selenocysteine. Selenocysteine lyase activity is however unsure in vivo. This chain is Cysteine desulfurase, found in Escherichia coli O7:K1 (strain IAI39 / ExPEC).